Here is a 171-residue protein sequence, read N- to C-terminus: Transcription factor E (171 aa).

The 84-residue stretch at 5 to 88 (YEDPFIRIAV…RWRSRREEVE (84 aa)) folds into the HTH TFE/IIEalpha-type domain.

Belongs to the TFE family. Monomer. Interaction with RNA polymerase subunits RpoF and RpoE is necessary for Tfe stimulatory transcription activity. Able to interact with Tbp and RNA polymerase in the absence of DNA promoter. Interacts both with the preinitiation and elongation complexes.

In terms of biological role, transcription factor that plays a role in the activation of archaeal genes transcribed by RNA polymerase. Facilitates transcription initiation by enhancing TATA-box recognition by TATA-box-binding protein (Tbp), and transcription factor B (Tfb) and RNA polymerase recruitment. Not absolutely required for transcription in vitro, but particularly important in cases where Tbp or Tfb function is not optimal. It dynamically alters the nucleic acid-binding properties of RNA polymerases by stabilizing the initiation complex and destabilizing elongation complexes. Seems to translocate with the RNA polymerase following initiation and acts by binding to the non template strand of the transcription bubble in elongation complexes. This chain is Transcription factor E, found in Cenarchaeum symbiosum (strain A).